The chain runs to 598 residues: Glutamine--fructose-6-phosphate aminotransferase [isomerizing] (598 aa).

The Nucleophile; for GATase activity role is filled by C2. Residues 2 to 218 (CGIVGYIGNN…DLSLGYASKD (217 aa)) enclose the Glutamine amidotransferase type-2 domain. SIS domains lie at 277–421 (VFDE…KRNL) and 450–588 (LSKR…VDMP). K593 (for Fru-6P isomerization activity) is an active-site residue.

In terms of assembly, homodimer.

It localises to the cytoplasm. The catalysed reaction is D-fructose 6-phosphate + L-glutamine = D-glucosamine 6-phosphate + L-glutamate. Catalyzes the first step in hexosamine metabolism, converting fructose-6P into glucosamine-6P using glutamine as a nitrogen source. This Campylobacter jejuni subsp. jejuni serotype O:2 (strain ATCC 700819 / NCTC 11168) protein is Glutamine--fructose-6-phosphate aminotransferase [isomerizing].